The sequence spans 233 residues: MADS-box transcription factor 56 (233 aa).

The 61-residue stretch at Met1–Pro61 folds into the MADS-box domain. One can recognise a K-box domain in the interval Ile87–Ala177.

Its subcellular location is the nucleus. Functionally, probable transcription factor. This chain is MADS-box transcription factor 56 (MADS56), found in Oryza sativa subsp. japonica (Rice).